Consider the following 107-residue polypeptide: NADH dehydrogenase [ubiquinone] 1 beta subcomplex subunit 10-A (107 aa).

A disordered region spans residues 1–23 (MGRKKGLPEFEESAPDGFDPENP).

The protein belongs to the complex I NDUFB10 subunit family. In terms of assembly, complex I is composed of at least 49 different subunits.

The protein resides in the mitochondrion inner membrane. Its function is as follows. Accessory subunit of the mitochondrial membrane respiratory chain NADH dehydrogenase (Complex I), that is believed not to be involved in catalysis. Complex I functions in the transfer of electrons from NADH to the respiratory chain. The immediate electron acceptor for the enzyme is believed to be ubiquinone. This is NADH dehydrogenase [ubiquinone] 1 beta subcomplex subunit 10-A from Arabidopsis thaliana (Mouse-ear cress).